A 3419-amino-acid polypeptide reads, in one-letter code: MKNPKEEIRRIRIVNMLKRGVARVNPLGGLKRLPAGLLLGHGPIRMVLAILAFLRFTAIKPSLGLINRWGSVGKKEAMEIIKKFKKDLAAMLRIINARKERKRRGADTSIGIIGLLLTTAMAAEITRRGSAYYMYLDRSDAGKAISFATTLGVNKCHVQIMDLGHMCDATMSYECPMLDEGVEPDDVDCWCNTTSTWVVYGTCHHKKGEARRSRRAVTLPSHSTRKLQTRSQTWLESREYTKHLIKVENWIFRNPGFALVAVAIAWLLGSSTSQKVIYLVMILLIAPAYSIRCIGVSNRDFVEGMSGGTWVDVVLEHGGCVTVMAQDKPTVDIELVTTTVSNMAEVRSYCYEASISDMASDSRCPTQGEAYLDKQSDTQYVCKRTLVDRGWGNGCGLFGKGSLVTCAKFTCSKKMTGKSIQPENLEYRIMLSVHGSQHSGMIGYETDEDRAKVEVTPNSPRAEATLGGFGSLGLDCEPRTGLDFSDLYYLTMNNKHWLVHKEWFHDIPLPWHAGADTGTPHWNNKEALVEFKDAHAKRQTVVVLGSQEGAVHTALAGALEAEMDGAKGRLFSGHLKCRLKMDKLRLKGVSYSLCTAAFTFTKVPAETLHGTVTVEVQYAGTDGPCKIPVQMAVDMQTLTPVGRLITANPVITESTENSKMMLELDPPFGDSYIVIGVGDKKITHHWHRSGSTIGKAFEATVRGAKRMAVLGDTAWDFGSVGGVFNSLGKGIHQIFGAAFKSLFGGMSWFSQILIGTLLVWLGLNTKNGSISLTCLALGGVMIFLSTAVSADVGCSVDFSKKETRCGTGVFIYNDVEAWRDRYKYHPDSPRRLAAAVKQAWEEGICGISSVSRMENIMWKSVEGELNAILEENGVQLTVVVGSVKNPMWRGPQRLPVPVNELPHGWKAWGKSYFVRAAKTNNSFVVDGDTLKECPLEHRAWNSFLVEDHGFGVFHTSVWLKVREDYSLECDPAVIGTAVKGREAAHSDLGYWIESEKNDTWRLKRAHLIEMKTCEWPKSHTLWTDGVEESDLIIPKSLAGPLSHHNTREGYRTQVKGPWHSEELEIRFEECPGTKVYVEETCGTRGPSLRSTTASGRVIEEWCCRECTMPPLSFRAKDGCWYGMEIRPRKEPESNLVRSMVTAGSTDHMDHFSLGVLVILLMVQEGLKKRMTTKIIMSTSMAVLVVMILGGFSMSDLAKLVILMGATFAEMNTGGDVAHLALVAAFKVRPALLVSFIFRANWTPRESMLLALASCLLQTAISALEGDLMVLINGFALAWLAIRAMAVPRTDNIALPILAALTPLARGTLLVAWRAGLATCGGIMLLSLKGKGSVKKNLPFVMALGLTAVRVVDPINVVGLLLLTRSGKRSWPPSEVLTAVGLICALAGGFAKADIEMAGPMAAVGLLIVSYVVSGKSVDMYIERAGDITWEKDAEVTGNSPRLDVALDESGDFSLVEEDGPPMREIILKVVLMAICGMNPIAIPFAAGAWYVYVKTGKRSGALWDVPAPKEVKKGETTDGVYRVMTRRLLGSTQVGVGVMQEGVFHTMWHVTKGAALRSGEGRLDPYWGDVKQDLVSYCGPWKLDAAWDGLSEVQLLAVPPGERARNIQTLPGIFKTKDGDIGAVALDYPAGTSGSPILDKCGRVIGLYGNGVVIKNGSYVSAITQGKREEETPVECFEPSMLKKKQLTVLDLHPGAGKTRRVLPEIVREAIKKRLRTVILAPTRVVAAEMEEALRGLPVRYMTTAVNVTHSGTEIVDLMCHATFTSRLLQPIRVPNYNLNIMDEAHFTDPSSIAARGYISTRVEMGEAAAIFMTATPPGTRDAFPDSNSPIMDTEVEVPERAWSSGFDWVTDHSGKTVWFVPSVRNGNEIAACLTKAGKRVIQLSRKTFETEFQKTKNQEWDFVITTDISEMGANFKADRVIDSRRCLKPVILDGERVILAGPMPVTHASAAQRRGRIGRNPNKPGDEYMYGGGCAETDEGHAHWLEARMLLDNIYLQDGLIASLYRPEADKVAAIEGEFKLRTEQRKTFVELMKRGDLPVWLAYQVASAGITYTDRRWCFDGTTNNTIMEDSVPAEVWTKYGEKRVLKPRWMDARVCSDHAALKSFKEFAAGKRGAALGVMEALGTLPGHMTERFQEAIDNLAVLMRAETGSRPYKAAAAQLPETLETIMLLGLLGTVSLGIFFVLMRNKGIGKMGFGMVTLGASAWLMWLSEIEPARIACVLIVVFLLLVVLIPEPEKQRSPQDNQMAIIIMVAVGLLGLITANELGWLERTKNDIAHLMGRREEGATMGFSMDIDLRPASAWAIYAALTTLITPAVQHAVTTSYNNYSLMAMATQAGVLFGMGKGMPFMHGDLGVPLLMMGCYSQLTPLTLIVAIILLVAHYMYLIPGLQAAAARAAQKRTAAGIMKNPVVDGIVVTDIDTMTIDPQVEKKMGQVLLIAVAISSAVLLRTAWGWGEAGALITAATSTLWEGSPNKYWNSSTATSLCNIFRGSYLAGASLIYTVTRNAGLVKRRGGGTGETLGEKWKARLNQMSALEFYSYKKSGITEVCREEARRALKDGVATGGHAVSRGSAKIRWLEERGYLQPYGKVVDLGCGRGGWSYYAATIRKVQEVRGYTKGGPGHEEPMLVQSYGWNIVRLKSGVDVFHMAAEPCDTLLCDIGESSSSPEVEETRTLRVLSMVGDWLEKRPGAFCIKVLCPYTSTMMETMERLQRRHGGGLVRVPLCRNSTHEMYWVSGAKSNIIKSVSTTSQLLLGRMDGPRRPVKYEEDVNLGSGTRAVASCAEAPNMKIIGRRIERIRNEHAETWFLDENHPYRTWAYHGSYEAPTQGSASSLVNGVVRLLSKPWDVVTGVTGIAMTDTTPYGQQRVFKEKVDTRVPDPQEGTRQVMNIVSSWLWKELGKRKRPRVCTKEEFINKVRSNAALGAIFEEEKEWKTAVEAVNDPRFWALVDREREHHLRGECHSCVYNMMGKREKKQGEFGKAKGSRAIWYMWLGARFLEFEALGFLNEDHWMGRENSGGGVEGLGLQRLGYILEEMNRAPGGKMYADDTAGWDTRISKFDLENEALITNQMEEGHRTLALAVIKYTYQNKVVKVLRPAEGGKTVMDIISRQDQRGSGQVVTYALNTFTNLVVQLIRNMEAEEVLEMQDLWLLRKPEKVTRWLQSNGWDRLKRMAVSGDDCVVKPIDDRFAHALRFLNDMGKVRKDTQEWKPSTGWSNWEEVPFCSHHFNKLYLKDGRSIVVPCRHQDELIGRARVSPGAGWSIRETACLAKSYAQMWQLLYFHRRDLRLMANAICSAVPVDWVPTGRTTWSIHGKGEWMTTEDMLMVWNRVWIEENDHMEDKTPVTKWTDIPYLGKREDLWCGSLIGHRPRTTWAENIKDTVNMVRRIIGDEEKYMDYLSTQVRYLGEEGSTPGVL.

Residues 1–25 (MKNPKEEIRRIRIVNMLKRGVARVN) form a disordered region. Residues 1-104 (MKNPKEEIRR…INARKERKRR (104 aa)) are Cytoplasmic-facing. Positions 37–72 (LLLGHGPIRMVLAILAFLRFTAIKPSLGLINRWGSV) are hydrophobic; homodimerization of capsid protein C. The propeptide at 105 to 122 (GADTSIGIIGLLLTTAMA) is ER anchor for capsid protein C, removed in mature form by serine protease NS3. The chain crosses the membrane as a helical span at residues 105–125 (GADTSIGIIGLLLTTAMAAEI). Residues 126–249 (TRRGSAYYMY…YTKHLIKVEN (124 aa)) lie on the Extracellular side of the membrane. The N-linked (GlcNAc...) asparagine; by host glycan is linked to asparagine 192. A helical transmembrane segment spans residues 250–269 (WIFRNPGFALVAVAIAWLLG). Over 270–274 (SSTSQ) the chain is Cytoplasmic. Residues 275–290 (KVIYLVMILLIAPAYS) form a helical membrane-spanning segment. Residues 291 to 741 (IRCIGVSNRD…HQIFGAAFKS (451 aa)) are Extracellular-facing. An intrachain disulfide couples cysteine 293 to cysteine 320. Residue lysine 328 forms a Glycyl lysine isopeptide (Lys-Gly) (interchain with G-Cter in ubiquitin) linkage. 7 cysteine pairs are disulfide-bonded: cysteine 350–cysteine 406, cysteine 350–cysteine 411, cysteine 364–cysteine 395, cysteine 382–cysteine 406, cysteine 382–cysteine 411, cysteine 476–cysteine 577, and cysteine 594–cysteine 625. A fusion peptide region spans residues 388-401 (DRGWGNGCGLFGKG). A Glycyl lysine isopeptide (Lys-Gly) (interchain with G-Cter in ubiquitin) cross-link involves residue lysine 567. Residues 742–763 (LFGGMSWFSQILIGTLLVWLGL) traverse the membrane as a helical segment. Topologically, residues 764–769 (NTKNGS) are cytoplasmic. The chain crosses the membrane as a helical span at residues 770 to 790 (ISLTCLALGGVMIFLSTAVSA). Residues 791 to 1173 (DVGCSVDFSK…EGLKKRMTTK (383 aa)) lie on the Lumenal side of the membrane. Cystine bridges form between cysteine 794-cysteine 805, cysteine 845-cysteine 933, cysteine 969-cysteine 1013, cysteine 1070-cysteine 1119, cysteine 1081-cysteine 1102, and cysteine 1103-cysteine 1106. Residues asparagine 920 and asparagine 997 are each glycosylated (N-linked (GlcNAc...) asparagine; by host). The helical transmembrane segment at 1174–1194 (IIMSTSMAVLVVMILGGFSMS) threads the bilayer. The Cytoplasmic segment spans residues 1195–1216 (DLAKLVILMGATFAEMNTGGDV). Residues 1217–1237 (AHLALVAAFKVRPALLVSFIF) form a helical membrane-spanning segment. Residues 1238-1266 (RANWTPRESMLLALASCLLQTAISALEGD) are Lumenal-facing. Residues 1267–1287 (LMVLINGFALAWLAIRAMAVP) form a helical membrane-spanning segment. The Cytoplasmic segment spans residues 1288–1291 (RTDN). A helical transmembrane segment spans residues 1292 to 1312 (IALPILAALTPLARGTLLVAW). Over 1313–1341 (RAGLATCGGIMLLSLKGKGSVKKNLPFVM) the chain is Lumenal. Residues 1342–1362 (ALGLTAVRVVDPINVVGLLLL) form a helical membrane-spanning segment. Topologically, residues 1363–1369 (TRSGKRS) are cytoplasmic. Residues 1370–1390 (WPPSEVLTAVGLICALAGGFA) traverse the membrane as a helical segment. At 1391–1393 (KAD) the chain is on the lumenal side. Residues 1394–1414 (IEMAGPMAAVGLLIVSYVVSG) form a helical membrane-spanning segment. Topologically, residues 1415 to 1468 (KSVDMYIERAGDITWEKDAEVTGNSPRLDVALDESGDFSLVEEDGPPMREIILK) are cytoplasmic. The segment at 1421–1460 (IERAGDITWEKDAEVTGNSPRLDVALDESGDFSLVEEDGP) is interacts with and activates NS3 protease. The segment at 1425–1447 (GDITWEKDAEVTGNSPRLDVALD) is disordered. The helical intramembrane region spans 1469–1489 (VVLMAICGMNPIAIPFAAGAW). The Lumenal portion of the chain corresponds to 1490–2166 (YVYVKTGKRS…KAAAAQLPET (677 aa)). The region spanning 1499–1676 (SGALWDVPAP…KREEETPVEC (178 aa)) is the Peptidase S7 domain. Active-site charge relay system; for serine protease NS3 activity residues include histidine 1549, aspartate 1573, and serine 1633. In terms of domain architecture, Helicase ATP-binding spans 1679 to 1835 (PSMLKKKQLT…DSNSPIMDTE (157 aa)). Residues 1683-1686 (KKKQ) form an important for RNA-binding region. 1692–1699 (LHPGAGKT) serves as a coordination point for ATP. Positions 1783–1786 (DEAH) match the DEAH box motif. The Helicase C-terminal domain maps to 1830–2009 (PIMDTEVEVP…GLIASLYRPE (180 aa)). Lysine 1887 carries the post-translational modification N6-acetyllysine; by host. A helical transmembrane segment spans residues 2167–2187 (LETIMLLGLLGTVSLGIFFVL). At 2188–2191 (MRNK) the chain is on the lumenal side. Residues 2192–2212 (GIGKMGFGMVTLGASAWLMWL) constitute an intramembrane region (helical). Residues 2213 to 2214 (SE) lie on the Cytoplasmic side of the membrane. The helical transmembrane segment at 2215–2235 (IEPARIACVLIVVFLLLVVLI) threads the bilayer. Over 2236 to 2250 (PEPEKQRSPQDNQMA) the chain is Lumenal. Positions 2251–2265 (IIIMVAVGLLGLITA) form an intramembrane region, helical. Residues 2266-2303 (NELGWLERTKNDIAHLMGRREEGATMGFSMDIDLRPAS) lie on the Lumenal side of the membrane. The segment at residues 2304 to 2324 (AWAIYAALTTLITPAVQHAVT) is an intramembrane region (helical). At 2325 to 2340 (TSYNNYSLMAMATQAG) the chain is on the lumenal side. The helical transmembrane segment at 2341–2361 (VLFGMGKGMPFMHGDLGVPLL) threads the bilayer. The Cytoplasmic portion of the chain corresponds to 2362-2371 (MMGCYSQLTP). The helical transmembrane segment at 2372–2392 (LTLIVAIILLVAHYMYLIPGL) threads the bilayer. The Lumenal segment spans residues 2393–2437 (QAAAARAAQKRTAAGIMKNPVVDGIVVTDIDTMTIDPQVEKKMGQ). Residues 2438–2458 (VLLIAVAISSAVLLRTAWGWG) traverse the membrane as a helical segment. Residues 2459-3419 (EAGALITAAT…GEEGSTPGVL (961 aa)) are Cytoplasmic-facing. One can recognise an mRNA cap 0-1 NS5-type MT domain in the interval 2517–2781 (GGGTGETLGE…DVNLGSGTRA (265 aa)). Residues lysine 2529, leucine 2532, asparagine 2533, methionine 2535, phenylalanine 2540, and lysine 2544 each coordinate mRNA. 2529–2535 (KARLNQM) provides a ligand contact to GTP. Serine 2572 serves as a coordination point for S-adenosyl-L-methionine. At serine 2572 the chain carries Phosphoserine. Lysine 2577 acts as the For 2'-O-MTase activity in catalysis. The tract at residues 2593-2596 (VVDL) is SUMO-interacting motif (SIM). Residues glycine 2602, tryptophan 2603, threonine 2620, lysine 2621, histidine 2626, glutamate 2627, aspartate 2647, valine 2648, aspartate 2662, and isoleucine 2663 each contribute to the S-adenosyl-L-methionine site. Residue aspartate 2662 is the For 2'-O-MTase activity of the active site. 2665–2671 (ESSSSPE) contributes to the GTP binding site. Serine 2666 is an mRNA binding site. Lysine 2698 (for 2'-O-MTase activity) is an active-site residue. Residues arginine 2729 and serine 2731 each coordinate mRNA. 2729 to 2731 (RNS) lines the GTP pocket. Glutamate 2734 (for 2'-O-MTase activity) is an active-site residue. Residue tyrosine 2736 participates in S-adenosyl-L-methionine binding. Residues 2904 to 2910 (KRKRPRV) carry the Nuclear localization signal (NLS) motif. Positions 2955, 2959, 2964, and 2967 each coordinate Zn(2+). The region spanning 3045–3195 (GKMYADDTAG…KPIDDRFAHA (151 aa)) is the RdRp catalytic domain. Zn(2+) contacts are provided by histidine 3230, cysteine 3246, and cysteine 3365.

The protein in the N-terminal section; belongs to the class I-like SAM-binding methyltransferase superfamily. mRNA cap 0-1 NS5-type methyltransferase family. As to quaternary structure, homodimer. Interacts with host SERTAD3; this interaction promotes capsid protein C degradation. Interacts with host CAPRIN1; this interaction is probably linked to the inhibition of stress granules formation by the virus. Interacts with host G3BP1; this interaction is probably linked to the inhibition of stress granules formation by the virus. Forms heterodimers with envelope protein E in the endoplasmic reticulum and Golgi. Interacts with non-structural protein 2A. In terms of assembly, homodimer; in the endoplasmic reticulum and Golgi. Interacts with host TYRO3, AXL and DC-SIGN proteins. Interacts with non-structural protein 2A. Interacts with host HAVCR1; this interaction likely mediates virus attachment to host cell. Interacts with host NCAM1. Interacts with host HSPA5. Interacts with Aedes aegypti SRPN25, APY and venom allergen-1 salivary proteins; the interactions do not affect Zika virus replication in human endothelial cells and keratinocytes. As to quaternary structure, homodimer; Homohexamer when secreted. Interacts with host TBK1. Interacts with host USP8. Interacts with envelope protein E. Interacts with host HSPA5. Interacts with the structural protein prM/E complex, and the NS2B/NS3 protease complex. In terms of assembly, forms a heterodimer with serine protease NS3. May form homooligomers. Interacts with human SPCS1. Interacts with non-structural protein 2A. As to quaternary structure, forms a heterodimer with NS2B. Interacts with NS4B. Interacts with unphosphorylated RNA-directed RNA polymerase NS5; this interaction stimulates RNA-directed RNA polymerase NS5 guanylyltransferase activity. Interacts with non-structural protein 2A. Interacts with host SHFL; this interaction promotes NS3 degradation via a lysosome-dependent pathway. Interacts with host CEP63; this interaction disorganizes the centrosome and inhibits host innate immune response. May interact with host ANKLE2; the interaction may cause defects in brain development, such as microcephaly. May interact with host SRPRA and SEC61G. In terms of assembly, interacts with serine protease NS3. Interacts with NS1. Interacts with host TBK1. As to quaternary structure, homodimer. Interacts with host STAT2; this interaction inhibits the phosphorylation of the latter, and, when all viral proteins are present (polyprotein), targets STAT2 for degradation. Interacts with host TBK1 and IKBKE; these interactions lead to the inhibition of the host RIG-I signaling pathway. Interacts with host KPNA2. Interacts with host PAF1 complex; the interaction may prevent the recruitment of the host PAF1 complex to interferon-responsive genes, and thus reduces the immune response. Interacts with serine protease NS3. Interacts with host ZSWIM8; this interaction allows STAT2 binding to ZSWIM8 and subsequent proteasomal degradation leading to inhibition of interferon signaling. Post-translationally, specific enzymatic cleavages in vivo yield mature proteins. Cleavages in the lumen of endoplasmic reticulum are performed by host signal peptidase, whereas cleavages in the cytoplasmic side are performed by serine protease NS3. Signal cleavage at the 2K-4B site requires a prior NS3 protease-mediated cleavage at the 4A-2K site. In terms of processing, cleaved in post-Golgi vesicles by a host furin, releasing the mature small envelope protein M, and peptide pr. This cleavage is incomplete as up to 30% of viral particles still carry uncleaved prM. N-glycosylation plays a role in virulence in mammalian and mosquito hosts, but may have no effect on neurovirulence. Post-translationally, ubiquitination by host TRIM7 promotes virus attachment and fusion of the virus and the host endosome membrane. In terms of processing, N-glycosylated. The excreted form is glycosylated, which is required for efficient secretion of the protein from infected cells. Acetylated by host KAT5. Acetylation modulates NS3 RNA-binding and unwinding activities and plays an important positive role for viral replication. Post-translationally, phosphorylated on serines residues. This phosphorylation may trigger NS5 nuclear localization. In terms of processing, sumoylated, required for regulating IFN induced interferon stimulated genes/ISGs.

It localises to the virion. It is found in the host nucleus. The protein localises to the host cytoplasm. The protein resides in the host perinuclear region. Its subcellular location is the secreted. It localises to the virion membrane. It is found in the host endoplasmic reticulum membrane. It carries out the reaction Selective hydrolysis of -Xaa-Xaa-|-Yaa- bonds in which each of the Xaa can be either Arg or Lys and Yaa can be either Ser or Ala.. It catalyses the reaction RNA(n) + a ribonucleoside 5'-triphosphate = RNA(n+1) + diphosphate. The enzyme catalyses a ribonucleoside 5'-triphosphate + H2O = a ribonucleoside 5'-diphosphate + phosphate + H(+). The catalysed reaction is ATP + H2O = ADP + phosphate + H(+). It carries out the reaction a 5'-end (5'-triphosphoguanosine)-ribonucleoside in mRNA + S-adenosyl-L-methionine = a 5'-end (N(7)-methyl 5'-triphosphoguanosine)-ribonucleoside in mRNA + S-adenosyl-L-homocysteine. It catalyses the reaction a 5'-end (N(7)-methyl 5'-triphosphoguanosine)-ribonucleoside in mRNA + S-adenosyl-L-methionine = a 5'-end (N(7)-methyl 5'-triphosphoguanosine)-(2'-O-methyl-ribonucleoside) in mRNA + S-adenosyl-L-homocysteine + H(+). Functionally, plays a role in virus budding by binding to the host cell membrane and packages the viral RNA into a nucleocapsid that forms the core of the mature virus particle. During virus entry, may induce genome penetration into the host cytoplasm after hemifusion induced by the surface proteins. Can migrate to the cell nucleus where it modulates host functions. Inhibits the integrated stress response (ISR) in the infected cell. Inhibits RNA silencing by interfering with host Dicer. Its function is as follows. Prevents premature fusion activity of envelope proteins in trans-Golgi by binding to envelope protein E at pH 6.0. After virion release in extracellular space, gets dissociated from E dimers. In terms of biological role, plays a role in host immune defense modulation and protection of envelope protein E during virion synthesis. PrM-E cleavage is inefficient, many virions are only partially matured and immature prM-E proteins could play a role in immune evasion. Contributes to fetal microcephaly in humans. Acts as a chaperone for envelope protein E during intracellular virion assembly by masking and inactivating envelope protein E fusion peptide. prM is the only viral peptide matured by host furin in the trans-Golgi network probably to avoid catastrophic activation of the viral fusion activity in acidic Golgi compartment prior to virion release. Functionally, may play a role in virus budding. Exerts cytotoxic effects by activating a mitochondrial apoptotic pathway through M ectodomain. May display a viroporin activity. Binds to host cell surface receptors and mediates fusion between viral and cellular membranes. Efficient virus attachment to cell is, at least in part, mediated by host HAVCR1 in a cell-type specific manner. In addition, host NCAM1 can also be used as entry receptor. Interaction with host HSPA5 plays an important role in the early stages of infection as well. Envelope protein is synthesized in the endoplasmic reticulum and forms a heterodimer with protein prM. The heterodimer plays a role in virion budding in the ER, and the newly formed immature particle is covered with 60 spikes composed of heterodimers between precursor prM and envelope protein E. The virion is transported to the Golgi apparatus where the low pH causes the dissociation of PrM-E heterodimers and formation of E homodimers. PrM-E cleavage is inefficient, many virions are only partially matured and immature prM-E proteins could play a role in immune evasion. Its function is as follows. Plays a role in the inhibition of host RLR-induced interferon-beta activation by targeting TANK-binding kinase 1/TBK1. In addition, recruits the host deubiquitinase USP8 to cleave 'Lys-11'-linked polyubiquitin chains from caspase-1/CASP1 thus inhibiting its proteasomal degradation. In turn, stabilized CASP1 promotes cleavage of cGAS, which inhibits its ability to recognize mitochondrial DNA release and initiate type I interferon signaling. In terms of biological role, component of the viral RNA replication complex that recruits genomic RNA, the structural protein prM/E complex, and the NS2B/NS3 protease complex to the virion assembly site and orchestrates virus morphogenesis. Antagonizes also the host MDA5-mediated induction of alpha/beta interferon antiviral response. May disrupt adherens junction formation and thereby impair proliferation of radial cells in the host cortex. Functionally, required cofactor for the serine protease function of NS3. Displays three enzymatic activities: serine protease, NTPase and RNA helicase. NS3 serine protease, in association with NS2B, performs its autocleavage and cleaves the polyprotein at dibasic sites in the cytoplasm: C-prM, NS2A-NS2B, NS2B-NS3, NS3-NS4A, NS4A-2K and NS4B-NS5. NS3 RNA helicase binds RNA and unwinds dsRNA in the 3' to 5' direction. Leads to translation arrest when expressed ex vivo. Disrupts host centrosome organization in a CEP63-dependent manner to degrade host TBK1 and inhibits innate immune response. Inhibits the integrated stress response (ISR) in the infected cell. Its function is as follows. Regulates the ATPase activity of the NS3 helicase activity. NS4A allows NS3 helicase to conserve energy during unwinding. Cooperatively with NS4B suppresses the Akt-mTOR pathway and leads to cellular dysregulation. By inhibiting host ANKLE2 functions, may cause defects in brain development, such as microcephaly. Also antagonizes the host MDA5-mediated induction of alpha/beta interferon antiviral response. Inhibits the integrated stress response (ISR) in the infected cell. In terms of biological role, functions as a signal peptide for NS4B and is required for the interferon antagonism activity of the latter. Functionally, induces the formation of ER-derived membrane vesicles where the viral replication takes place. Also plays a role in the inhibition of host RLR-induced interferon-beta production at TANK-binding kinase 1/TBK1 level. Cooperatively with NS4A suppresses the Akt-mTOR pathway and leads to cellular dysregulation. Replicates the viral (+) and (-) RNA genome, and performs the capping of genomes in the cytoplasm. Methylates viral RNA cap at guanine N-7 and ribose 2'-O positions. Once sufficient NS5 is expressed, binds to the cap-proximal structure and inhibits further translation of the viral genome. Besides its role in RNA genome replication, also prevents the establishment of a cellular antiviral state by blocking the interferon-alpha/beta (IFN-alpha/beta) signaling pathway. Mechanistically, interferes with host kinases TBK1 and IKKE upstream of interferon regulatory factor 3/IRF3 to inhibit the RIG-I pathway. Also antagonizes type I interferon signaling by targeting STAT2 for degradation by the proteasome thereby preventing activation of JAK-STAT signaling pathway. Mechanistically, acts as a scaffold protein to connect host ZSWIM8/CUL3 ligase complex and STAT2, leading to STAT2 degradation. Within the host nucleus, disrupts host SUMO1 and STAT2 co-localization with PML, resulting in PML degradation. May also reduce immune responses by preventing the recruitment of the host PAF1 complex to interferon-responsive genes. This Aedes aegypti (Yellowfever mosquito) protein is Genome polyprotein.